The primary structure comprises 598 residues: Elongation factor 4 (598 aa).

Residues 4–186 (SRLRNFSIIA…EIVKKIPPPK (183 aa)) form the tr-type G domain. GTP-binding positions include 16-21 (DHGKST) and 133-136 (NKID).

Belongs to the TRAFAC class translation factor GTPase superfamily. Classic translation factor GTPase family. LepA subfamily.

The protein resides in the cell inner membrane. The catalysed reaction is GTP + H2O = GDP + phosphate + H(+). In terms of biological role, required for accurate and efficient protein synthesis under certain stress conditions. May act as a fidelity factor of the translation reaction, by catalyzing a one-codon backward translocation of tRNAs on improperly translocated ribosomes. Back-translocation proceeds from a post-translocation (POST) complex to a pre-translocation (PRE) complex, thus giving elongation factor G a second chance to translocate the tRNAs correctly. Binds to ribosomes in a GTP-dependent manner. The protein is Elongation factor 4 of Pelobacter propionicus (strain DSM 2379 / NBRC 103807 / OttBd1).